The sequence spans 1889 residues: Protein TIC 214 (1889 aa).

A run of 6 helical transmembrane segments spans residues 11-31 (LISLYMTIINSVVMVGLYYGF), 67-87 (FIAGQLMMFISIYYVPLHLAL), 88-108 (GKPHTITVLALPYLLFHFFWN), 127-147 (LSIQCVFLNNLIIQLFNHFIL), 175-195 (VGWLIGHILLMKWVGLVLVWI), and 224-244 (IFSILLFITCVYYLGRIPSPI). Positions 255-265 (PEEVGESEEER) are enriched in acidic residues. Disordered regions lie at residues 255–303 (PEEV…PSKE) and 1610–1633 (SNQEKDVEEDYDKSDKKKRRKKKQ). Residues 279–293 (NQKQGTEENTSSSLF) are compositionally biased toward polar residues.

The protein belongs to the TIC214 family. In terms of assembly, part of the Tic complex.

The protein resides in the plastid. It localises to the chloroplast inner membrane. Functionally, involved in protein precursor import into chloroplasts. May be part of an intermediate translocation complex acting as a protein-conducting channel at the inner envelope. The protein is Protein TIC 214 of Gossypium barbadense (Sea Island cotton).